A 164-amino-acid chain; its full sequence is CDP-archaeol synthase (164 aa).

Transmembrane regions (helical) follow at residues 3–23 (LTVF…AVFA), 55–75 (AIGI…YHVI), 77–97 (VFDA…GAFI), and 122–142 (FLVY…AVVI).

The protein belongs to the CDP-archaeol synthase family. Requires Mg(2+) as cofactor.

It is found in the cell membrane. It catalyses the reaction 2,3-bis-O-(geranylgeranyl)-sn-glycerol 1-phosphate + CTP + H(+) = CDP-2,3-bis-O-(geranylgeranyl)-sn-glycerol + diphosphate. The protein operates within membrane lipid metabolism; glycerophospholipid metabolism. In terms of biological role, catalyzes the formation of CDP-2,3-bis-(O-geranylgeranyl)-sn-glycerol (CDP-archaeol) from 2,3-bis-(O-geranylgeranyl)-sn-glycerol 1-phosphate (DGGGP) and CTP. This reaction is the third ether-bond-formation step in the biosynthesis of archaeal membrane lipids. The protein is CDP-archaeol synthase of Pyrobaculum aerophilum (strain ATCC 51768 / DSM 7523 / JCM 9630 / CIP 104966 / NBRC 100827 / IM2).